We begin with the raw amino-acid sequence, 316 residues long: Cytochrome c biogenesis protein CcsA (316 aa).

8 helical membrane passes run 19–39, 47–67, 77–97, 106–126, 151–171, 224–244, 258–275, and 285–305; these read VLTLGSLAFVLILISLPFSFW, SSIVRILIASANILLAIQLVF, ISNLYESLCFLTWGLTFIQLL, LIQAALTPISLLSIAFASFVL, VIMCSYAALLIGSLLSLVVLL, TITFGFLLLTFGLISGAVWAN, TWAFISWLIYAAYLHTRL, and AIIAIIGLFIILICYIGVNFL.

Belongs to the CcmF/CycK/Ccl1/NrfE/CcsA family. As to quaternary structure, may interact with ccs1.

The protein localises to the cellular thylakoid membrane. In terms of biological role, required during biogenesis of c-type cytochromes (cytochrome c6 and cytochrome f) at the step of heme attachment. The protein is Cytochrome c biogenesis protein CcsA of Prochlorococcus marinus (strain SARG / CCMP1375 / SS120).